Reading from the N-terminus, the 193-residue chain is Small ribosomal subunit protein uS7 (193 aa).

It belongs to the universal ribosomal protein uS7 family. Part of the 30S ribosomal subunit.

Functionally, one of the primary rRNA binding proteins, it binds directly to 16S rRNA where it nucleates assembly of the head domain of the 30S subunit. Is located at the subunit interface close to the decoding center. This Saccharolobus solfataricus (strain ATCC 35092 / DSM 1617 / JCM 11322 / P2) (Sulfolobus solfataricus) protein is Small ribosomal subunit protein uS7.